A 527-amino-acid chain; its full sequence is Lysine--tRNA ligase (527 aa).

Glutamate 431 and glutamate 438 together coordinate Mg(2+).

The protein belongs to the class-II aminoacyl-tRNA synthetase family. As to quaternary structure, homodimer. The cofactor is Mg(2+).

It localises to the cytoplasm. It catalyses the reaction tRNA(Lys) + L-lysine + ATP = L-lysyl-tRNA(Lys) + AMP + diphosphate. The protein is Lysine--tRNA ligase (lysS) of Chlamydia pneumoniae (Chlamydophila pneumoniae).